Reading from the N-terminus, the 291-residue chain is tRNA dimethylallyltransferase (291 aa).

9-16 contacts ATP; sequence GPTASGKT. 11-16 is a substrate binding site; sequence TASGKT. The interval 34–37 is interaction with substrate tRNA; sequence DSLQ.

The protein belongs to the IPP transferase family. Monomer. Mg(2+) serves as cofactor.

It carries out the reaction adenosine(37) in tRNA + dimethylallyl diphosphate = N(6)-dimethylallyladenosine(37) in tRNA + diphosphate. Catalyzes the transfer of a dimethylallyl group onto the adenine at position 37 in tRNAs that read codons beginning with uridine, leading to the formation of N6-(dimethylallyl)adenosine (i(6)A). The protein is tRNA dimethylallyltransferase of Onion yellows phytoplasma (strain OY-M).